Consider the following 236-residue polypeptide: uncharacterized protein (236 aa).

NADP(+)-binding residues include Asp-22, Asn-49, and Lys-82. Active-site proton donor residues include Ser-100 and Tyr-114. Residues Tyr-114 and Lys-118 each contribute to the NADP(+) site. Lys-118 functions as the Lowers pKa of active site Tyr in the catalytic mechanism.

The protein belongs to the short-chain dehydrogenases/reductases (SDR) family.

Its subcellular location is the cytoplasm. The protein localises to the nucleus. This is an uncharacterized protein from Schizosaccharomyces pombe (strain 972 / ATCC 24843) (Fission yeast).